The chain runs to 404 residues: tRNA pseudouridine synthase D (404 aa).

Catalysis depends on Asp79, which acts as the Nucleophile. A TRUD domain is found at 154-364; sequence GVPNRFGEQR…MEGERRPLRV (211 aa).

This sequence belongs to the pseudouridine synthase TruD family.

The catalysed reaction is uridine(13) in tRNA = pseudouridine(13) in tRNA. In terms of biological role, responsible for synthesis of pseudouridine from uracil-13 in transfer RNAs. This is tRNA pseudouridine synthase D from Geobacter metallireducens (strain ATCC 53774 / DSM 7210 / GS-15).